The chain runs to 258 residues: Imidazole glycerol phosphate synthase subunit HisF (258 aa).

Active-site residues include Asp11 and Asp130.

The protein belongs to the HisA/HisF family. In terms of assembly, heterodimer of HisH and HisF.

The protein resides in the cytoplasm. The enzyme catalyses 5-[(5-phospho-1-deoxy-D-ribulos-1-ylimino)methylamino]-1-(5-phospho-beta-D-ribosyl)imidazole-4-carboxamide + L-glutamine = D-erythro-1-(imidazol-4-yl)glycerol 3-phosphate + 5-amino-1-(5-phospho-beta-D-ribosyl)imidazole-4-carboxamide + L-glutamate + H(+). The protein operates within amino-acid biosynthesis; L-histidine biosynthesis; L-histidine from 5-phospho-alpha-D-ribose 1-diphosphate: step 5/9. In terms of biological role, IGPS catalyzes the conversion of PRFAR and glutamine to IGP, AICAR and glutamate. The HisF subunit catalyzes the cyclization activity that produces IGP and AICAR from PRFAR using the ammonia provided by the HisH subunit. This chain is Imidazole glycerol phosphate synthase subunit HisF, found in Gluconacetobacter diazotrophicus (strain ATCC 49037 / DSM 5601 / CCUG 37298 / CIP 103539 / LMG 7603 / PAl5).